Here is a 1337-residue protein sequence, read N- to C-terminus: uncharacterized protein (1337 aa).

Disordered regions lie at residues 1–94 (MPTS…QSSA) and 119–174 (ARDI…PSFF). Low complexity-rich tracts occupy residues 18 to 37 (SNTS…ASGS) and 68 to 79 (SSTHFQSSHSVS). Residues 80-94 (NAHNQSPLNQSQSSA) are compositionally biased toward polar residues. Low complexity predominate over residues 123-147 (PQQPSHSQNPSSSSSSSSSQSSQHS). A compositionally biased stretch (basic and acidic residues) spans 157-167 (NEKKSLDDPSP). Transmembrane regions (helical) follow at residues 209 to 229 (GLKP…LVLA), 241 to 261 (FFVV…PMLW), 267 to 287 (FLLL…ATVA), 328 to 348 (VRPL…ALFI), 361 to 381 (CVFS…YPYF), and 387 to 407 (LFFI…TLFI). Disordered regions lie at residues 623–662 (SHVR…SHKS) and 868–894 (YDEN…DADH). The span at 626–644 (RTGSNNSEAPLAAKTSTTK) shows a compositional bias: polar residues. Over residues 868–880 (YDENIHNDVDKDM) the composition is skewed to basic and acidic residues. 6 consecutive transmembrane segments (helical) span residues 917 to 937 (MNVF…PAFC), 975 to 995 (IFGT…GSGH), 997 to 1017 (LGNA…IQFI), 1021 to 1041 (FVIL…LTVT), 1066 to 1086 (FLTV…PQPR), and 1275 to 1295 (FAVG…IMFI).

The protein localises to the membrane. This is an uncharacterized protein from Schizosaccharomyces pombe (strain 972 / ATCC 24843) (Fission yeast).